Reading from the N-terminus, the 181-residue chain is Oligoribonuclease (181 aa).

The 164-residue stretch at 8–171 folds into the Exonuclease domain; it reads LIWIDLEMTG…QDIQESIAEL (164 aa). Tyrosine 129 is an active-site residue.

This sequence belongs to the oligoribonuclease family.

It localises to the cytoplasm. Its function is as follows. 3'-to-5' exoribonuclease specific for small oligoribonucleotides. The protein is Oligoribonuclease of Shewanella baltica (strain OS155 / ATCC BAA-1091).